Consider the following 172-residue polypeptide: Male-specific submandibular salivary gland protein (172 aa).

The N-terminal stretch at 1–15 is a signal peptide; that stretch reads MVKFLLLALALGVSC. N41 is a glycosylation site (N-linked (GlcNAc...) asparagine). 2 disulfides stabilise this stretch: C60/C64 and C79/C170.

The protein belongs to the calycin superfamily. Lipocalin family. Post-translationally, N-glycosylated. In terms of tissue distribution, expressed in acinar cells of the submandibular salivary gland from where it is secreted into saliva (at protein level). Also released from the submandibular salivary gland into blood and excreted in urine (at protein level). Expressed in the lacrimal gland from where it is secreted into tears (at protein level).

Its subcellular location is the secreted. It is found in the cytoplasm. The polypeptide is Male-specific submandibular salivary gland protein (Mesocricetus auratus (Golden hamster)).